The primary structure comprises 497 residues: NADH-ubiquinone oxidoreductase chain 4 (497 aa).

A run of 14 helical transmembrane segments spans residues 3–23 (FLLY…LLII), 42–62 (LFFS…SDNI), 94–114 (ISLL…LISW), 122–142 (NSFI…FCVL), 144–164 (LVFF…LIGV), 178–198 (LFFY…VIYS), 220–240 (ILWA…PFHI), 250–270 (PTVG…YGLL), 276–296 (IFCD…LLGI), 313–333 (IAYA…TSNI), 340–360 (VFLM…IGCV), 374–394 (GLVS…LSNI), 418–438 (FAAL…IWLY), and 463–483 (VVGF…SYII).

Belongs to the complex I subunit 4 family.

Its subcellular location is the mitochondrion membrane. It catalyses the reaction a ubiquinone + NADH + 5 H(+)(in) = a ubiquinol + NAD(+) + 4 H(+)(out). In terms of biological role, core subunit of the mitochondrial membrane respiratory chain NADH dehydrogenase (Complex I) that is believed to belong to the minimal assembly required for catalysis. Complex I functions in the transfer of electrons from NADH to the respiratory chain. The immediate electron acceptor for the enzyme is believed to be ubiquinone. The polypeptide is NADH-ubiquinone oxidoreductase chain 4 (ND4) (Acanthamoeba castellanii (Amoeba)).